A 566-amino-acid chain; its full sequence is Alpha-amylase (566 aa).

The N-terminal stretch at 1 to 28 (MARRLATASLAVLAAAATALTAPTPAAA) is a signal peptide. Ca(2+) contacts are provided by Asn120, Gln166, and Asp175. Asp205 functions as the Nucleophile in the catalytic mechanism. Residue His209 coordinates Ca(2+). Glu232 acts as the Proton donor in catalysis. One can recognise a CBM20 domain in the interval 465–566 (GPGTGQTSAS…ALTLNDTWRG (102 aa)).

The protein belongs to the glycosyl hydrolase 13 family. In terms of assembly, monomer. Ca(2+) is required as a cofactor.

The catalysed reaction is Endohydrolysis of (1-&gt;4)-alpha-D-glucosidic linkages in polysaccharides containing three or more (1-&gt;4)-alpha-linked D-glucose units.. In Streptomyces griseus, this protein is Alpha-amylase (amy).